Here is a 2017-residue protein sequence, read N- to C-terminus: Protein cbp-1 (2017 aa).

Basic and acidic residues predominate over residues 1–13 (MDEPPSKKSRADS). The disordered stretch occupies residues 1-182 (MDEPPSKKSR…PGMFQGDQQQ (182 aa)). 2 stretches are compositionally biased toward low complexity: residues 21-30 (ALSALESLEA) and 78-90 (QPGQ…PPQN). The span at 106–116 (NPSQTSNNSPR) shows a compositional bias: polar residues. The span at 141-151 (MMSPPSMGRVP) shows a compositional bias: low complexity. A compositionally biased stretch (pro residues) spans 152 to 164 (GPSPGGPQPPGPG). Positions 165–182 (QPQMRPGQPGMFQGDQQQ) are enriched in low complexity. The residue at position 234 (R234) is a Symmetric dimethylarginine; by PRMT5; in vitro. The interval 307 to 398 (SNGQPIRGPN…PGSSMLATHQ (92 aa)) is disordered. The span at 340 to 379 (QAAAAQHAAQQQAAAQAQAQAAAQQQQQQQREQEAAAAAQ) shows a compositional bias: low complexity. The segment at 399–505 (DPEKRKLIQQ…REDCPVCKPL (107 aa)) adopts a TAZ-type 1 zinc-finger fold. Disordered stretches follow at residues 558–593 (EGFN…DMPD) and 706–864 (GRSD…DTVF). Over residues 559–573 (GFNGNPFQNGPNRGG) the composition is skewed to low complexity. Residues 593–672 (DCTKEWHHQV…KIYKIQKELQ (80 aa)) enclose the KIX domain. Over residues 721–773 (PSQQNQPWGGAPNSNMHQQIPPNGQVPQVNNSSTFPSSGNSTPNIGASSTVSA) the composition is skewed to polar residues. Positions 834–854 (KDTKDGVAESKPKEQQAKREP) are enriched in basic and acidic residues. Residues 864 to 970 (FSQEDLIKFL…EMFVSEMDPV (107 aa)) enclose the Bromo domain. 2 interaction with histone regions span residues 902-948 (DYHE…YNRK) and 1224-1226 (YLD). The CBP/p300-type HAT domain maps to 1112 to 1492 (KYLASKLPHN…LAYSLHETDS (381 aa)). Residues 1225–1227 (LDS), 1237–1238 (RT), I1284, R1289, and W1293 contribute to the acetyl-CoA site. The span at 1349–1358 (NEEAQRKVKE) shows a compositional bias: basic and acidic residues. The segment at 1349 to 1401 (NEEAQRKVKEDDDDGEDADGGLGGGDSGKKKSSKNKKNNLKKNAKMNKKKAGS) is disordered. Basic residues predominate over residues 1378–1399 (KKSSKNKKNNLKKNAKMNKKKA). The ZZ-type zinc-finger motif lies at 1494–1540 (GMEYTCNKCSSPAVWHCQSCDDFDLCDGCKPTTQHPHEMEKIKSLIG). Zn(2+) is bound by residues C1499, C1502, C1510, C1513, C1519, C1522, H1528, and H1530. The segment at 1550-1631 (GGTRYESIQR…ACTVPFCMNI (82 aa)) adopts a TAZ-type 2 zinc-finger fold. Disordered regions lie at residues 1656-1828 (GLQS…QPVR) and 1908-2017 (SQMS…AGGQ). Residues 1667–1678 (TPSTVSNGTPSN) show a composition bias toward polar residues. The segment covering 1699 to 1708 (QVQMQQHQGS) has biased composition (low complexity). Residues 1748 to 1757 (PQMNANQSRY) show a composition bias toward polar residues. 2 stretches are compositionally biased toward low complexity: residues 1793-1812 (MNPQ…QNPG) and 1908-1932 (SQMS…QAGA). Residues 1943–1962 (QNNSQPRAPSGQFASMNPSM) show a composition bias toward polar residues. Positions 1963-2017 (QQQYPQQQQGWPQQRQQNPGGMQQNANPYNQFQNRQNMMMMPQQQQPHPSNAGGQ) are enriched in low complexity.

In terms of assembly, interacts (via N-terminus domain and HAT domain) with prmt-5; the interaction results in methylation of cbp-1. Interacts (via HAT domain) with cep-1; cep-1 transcriptional activity may be inhibited by interaction with methylated cbp-1. Component of a complex that contains prmt-5 and cbp-1. Methylation by prmt-5 may repress the capacity of cbp-1 to enhance cep-1-dependent transcription of egl-1.

Its subcellular location is the nucleus. The catalysed reaction is L-lysyl-[protein] + acetyl-CoA = N(6)-acetyl-L-lysyl-[protein] + CoA + H(+). Acetyltransferase enzyme. Acetylates histones, giving a specific tag for transcriptional activation. May prevent DNA damage-induced apoptosis by inhibiting cep-1-dependent transcription activation of the programmed cell death activator egl-1. In differentiated cells, negatively regulates localization of heterochromatin to the nuclear periphery. Plays a role in migration of gonadal distal tip cells, where it probably modulates expression of genes involved in integrin-mediated adhesion. The sequence is that of Protein cbp-1 (cbp-1) from Caenorhabditis elegans.